Reading from the N-terminus, the 214-residue chain is Redox-sensing transcriptional repressor Rex (214 aa).

Positions I16–F55 form a DNA-binding region, H-T-H motif. Residue G90–G95 participates in NAD(+) binding.

It belongs to the transcriptional regulatory Rex family. In terms of assembly, homodimer.

The protein localises to the cytoplasm. Its function is as follows. Modulates transcription in response to changes in cellular NADH/NAD(+) redox state. This Limosilactobacillus reuteri (strain DSM 20016) (Lactobacillus reuteri) protein is Redox-sensing transcriptional repressor Rex.